Consider the following 984-residue polypeptide: METKGYHSLPEGLDMERRWGQVSQAVERSSLGPTERTDENNYMEIVNVSCVSGAIPNNSTQGSSKEKQELLPCLQQDNNRPGILTSDIKTELESKELSATVAESMGLYMDSVRDADYSYEQQNQQGSMSPAKIYQNVEQLVKFYKGNGHRPSTLSCVNTPLRSFMSDSGSSVNGGVMRAVVKSPIMCHEKSPSVCSPLNMTSSVCSPAGINSVSSTTASFGSFPVHSPITQGTPLTCSPNVENRGSRSHSPAHASNVGSPLSSPLSSMKSSISSPPSHCSVKSPVSSPNNVTLRSSVSSPANINNSRCSVSSPSNTNNRSTLSSPAASTVGSICSPVNNAFSYTASGTSAGSSTLRDVVPSPDTQEKGAQEVPFPKTEEVESAISNGVTGQLNIVQYIKPEPDGAFSSSCLGGNSKINSDSSFSVPIKQESTKHSCSGTSFKGNPTVNPFPFMDGSYFSFMDDKDYYSLSGILGPPVPGFDGNCEGSGFPVGIKQEPDDGSYYPEASIPSSAIVGVNSGGQSFHYRIGAQGTISLSRSARDQSFQHLSSFPPVNTLVESWKSHGDLSSRRSDGYPVLEYIPENVSSSTLRSVSTGSSRPSKICLVCGDEASGCHYGVVTCGSCKVFFKRAVEGQHNYLCAGRNDCIIDKIRRKNCPACRLQKCLQAGMNLGARKSKKLGKLKGIHEEQPQQQQPPPPPPPPQSPEEGTTYIAPAKEPSVNTALVPQLSTISRALTPSPVMVLENIEPEIVYAGYDSSKPDTAENLLSTLNRLAGKQMIQVVKWAKVLPGFKNLPLEDQITLIQYSWMCLSSFALSWRSYKHTNSQFLYFAPDLVFNEEKMHQSAMYELCQGMHQISLQFVRLQLTFEEYTIMKVLLLLSTIPKDGLKSQAAFEEMRTNYIKELRKMVTKCPNNSGQSWQRFYQLTKLLDSMHDLVSDLLEFCFYTFRESHALKVEFPAMLVEIISDQLPKVESGNAKPLYFHRK.

The segment at 1-602 is modulating; that stretch reads METKGYHSLP…STGSSRPSKI (602 aa). Residues 231-243 are compositionally biased toward polar residues; that stretch reads QGTPLTCSPNVEN. Disordered regions lie at residues 231–329 and 347–373; these read QGTP…AAST and GTSA…QEVP. Phosphoserine is present on residues Ser250, Ser259, Ser283, Ser287, and Ser299. The span at 259–291 shows a compositional bias: low complexity; the sequence is SPLSSPLSSMKSSISSPPSHCSVKSPVSSPNNV. Positions 292-329 are enriched in polar residues; sequence TLRSSVSSPANINNSRCSVSSPSNTNNRSTLSSPAAST. Zn(2+) is bound by residues Cys603, Cys606, Cys620, Cys623, Cys639, Cys645, Cys655, and Cys658. 2 consecutive NR C4-type zinc fingers follow at residues 603–623 and 639–663; these read CLVC…CGSC and CAGR…LQKC. Positions 603–668 form a DNA-binding region, nuclear receptor; it reads CLVCGDEASG…RLQKCLQAGM (66 aa). Residues 669 to 725 are hinge; that stretch reads NLGARKSKKLGKLKGIHEEQPQQQQPPPPPPPPQSPEEGTTYIAPAKEPSVNTALVP. The tract at residues 684-710 is disordered; that stretch reads IHEEQPQQQQPPPPPPPPQSPEEGTTY. The segment covering 692 to 703 has biased composition (pro residues); the sequence is QQPPPPPPPPQS. The region spanning 726-964 is the NR LBD domain; it reads QLSTISRALT…EFPAMLVEII (239 aa). 21-hydroxyprogesterone-binding residues include Asn770 and Gln776. The aldosterone site is built by Asn770 and Gln776. Progesterone contacts are provided by Asn770 and Gln776. Residues 782 to 785 form an important for coactivator binding region; sequence KWAK. Positions 817 and 945 each coordinate 21-hydroxyprogesterone. Residues Arg817 and Thr945 each contribute to the aldosterone site. Progesterone contacts are provided by Arg817 and Thr945.

Belongs to the nuclear hormone receptor family. NR3 subfamily. As to quaternary structure, heteromultimeric cytoplasmic complex with HSP90, HSP70, and FKBP4, in the absence of ligand. After ligand binding, it translocates to the nucleus and binds to DNA as a homodimer and as a heterodimer with NR3C1. May interact with HSD11B2 in the absence of ligand. Binds the coactivators NCOA1, NCOA2, TIF1 and NRIP1. Post-translationally, phosphorylated. Ubiquitous. Highly expressed in distal tubules, convoluted tubules and cortical collecting duct in kidney, and in sweat glands. Detected at lower levels in cardiomyocytes, in epidermis and in colon enterocytes.

Its subcellular location is the cytoplasm. It is found in the nucleus. It localises to the endoplasmic reticulum membrane. Its function is as follows. Receptor for both mineralocorticoids (MC) such as aldosterone and glucocorticoids (GC) such as corticosterone or cortisol. Binds to mineralocorticoid response elements (MRE) and transactivates target genes. The effect of MC is to increase ion and water transport and thus raise extracellular fluid volume and blood pressure and lower potassium levels. This chain is Mineralocorticoid receptor (NR3C2), found in Homo sapiens (Human).